The chain runs to 247 residues: Triosephosphate isomerase (247 aa).

Residues N10 and K12 each coordinate substrate. The active-site Electrophile is H94. The Proton acceptor role is filled by E164.

This sequence belongs to the triosephosphate isomerase family. As to quaternary structure, homodimer.

It carries out the reaction D-glyceraldehyde 3-phosphate = dihydroxyacetone phosphate. The protein operates within carbohydrate biosynthesis; gluconeogenesis. Its pathway is carbohydrate degradation; glycolysis; D-glyceraldehyde 3-phosphate from glycerone phosphate: step 1/1. The sequence is that of Triosephosphate isomerase (Tpi) from Drosophila simulans (Fruit fly).